The following is a 172-amino-acid chain: Putative Dresden prostate carcinoma protein 2 (172 aa).

Positions 40–61 (QCEEEEAMTPRPTKARAPLPSA) are disordered.

As to expression, very high expression in prostate and prostate cancer. Faint expression in other tissues.

This is Putative Dresden prostate carcinoma protein 2 (HMGN2P46) from Homo sapiens (Human).